Consider the following 540-residue polypeptide: Membrane protein insertase YidC (540 aa).

Transmembrane regions (helical) follow at residues 7–27, 345–365, 415–435, 453–473, and 494–514; these read LLVL…QMDY, IVSN…GILY, LGGC…YWTF, LSAQ…MFLL, and PLIF…YWLV.

This sequence belongs to the OXA1/ALB3/YidC family. Type 1 subfamily. As to quaternary structure, interacts with the Sec translocase complex via SecD. Specifically interacts with transmembrane segments of nascent integral membrane proteins during membrane integration.

It localises to the cell inner membrane. In terms of biological role, required for the insertion and/or proper folding and/or complex formation of integral membrane proteins into the membrane. Involved in integration of membrane proteins that insert both dependently and independently of the Sec translocase complex, as well as at least some lipoproteins. Aids folding of multispanning membrane proteins. In Mannheimia succiniciproducens (strain KCTC 0769BP / MBEL55E), this protein is Membrane protein insertase YidC.